The primary structure comprises 1031 residues: Error-prone DNA polymerase (1031 aa).

This sequence belongs to the DNA polymerase type-C family. DnaE2 subfamily.

It is found in the cytoplasm. The catalysed reaction is DNA(n) + a 2'-deoxyribonucleoside 5'-triphosphate = DNA(n+1) + diphosphate. DNA polymerase involved in damage-induced mutagenesis and translesion synthesis (TLS). It is not the major replicative DNA polymerase. The chain is Error-prone DNA polymerase from Pseudomonas aeruginosa (strain ATCC 15692 / DSM 22644 / CIP 104116 / JCM 14847 / LMG 12228 / 1C / PRS 101 / PAO1).